The primary structure comprises 718 residues: MSNEGKCPVMHGGATSATQADNHWWPKALNLDILHQHDSKTNPMAPGFNYREALKGLDVEALKQDLKALMTDSQAWWPADWGHYGGLMIRMAWHSAGTYRIADGRGGGGHGAQRFAPLNSWPDNGNLDKARRLLWPIKQKYGNKVSWADLMILAGNMAYESMGLKTFGFAFGREDIWHPEKDTYWGAEKEWLAPSGGANSRYSGVRDLQNPLAAVMMGLIYVNPEGVDGNPDPLKTAQDMRVTFARMAMNDEETVALTAGGHTVGKAHGNGNAANLGPEPEAAPLEEQGFGWMNHQSRGIGRNTVTSGIEGAWTTHPTRWDNGYFHLLFSYDWALTKSPAGAWQWEPVNIREEDKPVDVEDPNIRSNPMMTDADMALKMDPDYRRIAERFFHDPDYFADTFARAWFKLTHRDMGPKSRYFGPDVPAEDLIWQDPVPKGNSQYDPEAVKARIAGTGLGAAELVATAWDSARTYRNSDKRGGANGARIRLLPQKDWVANEPARLARVLELLTPIASDMGVSIADTLVLGGNLGVELAAKAAGFNIKVPFIPGRGDASQAQTDIDSFEVLEPLADGFRNWQKQDFVVTPEEMLLDRAQLMGLSAPEMTVLIGGMRAMAVNHGGTTHGVLTDNPGSLSNDFFVNLTDMSYRWKPVANNLYEICDRASGQKKWTATRVDLVFGSNSVLRAYAEYYAQDDNKETFVKDFVTAWCKVMNADRFDA.

Positions 93-221 form a cross-link, tryptophyl-tyrosyl-methioninium (Trp-Tyr) (with M-247); it reads WHSAGTYRIA…LAAVMMGLIY (129 aa). The Proton acceptor role is filled by histidine 94. The tryptophyl-tyrosyl-methioninium (Tyr-Met) (with W-93) cross-link spans 221-247; it reads YVNPEGVDGNPDPLKTAQDMRVTFARM. Position 262 (histidine 262) interacts with heme b.

The protein belongs to the peroxidase family. Peroxidase/catalase subfamily. Homodimer or homotetramer. Heme b is required as a cofactor. In terms of processing, formation of the three residue Trp-Tyr-Met cross-link is important for the catalase, but not the peroxidase activity of the enzyme.

It catalyses the reaction H2O2 + AH2 = A + 2 H2O. The enzyme catalyses 2 H2O2 = O2 + 2 H2O. Functionally, bifunctional enzyme with both catalase and broad-spectrum peroxidase activity. In Shewanella amazonensis (strain ATCC BAA-1098 / SB2B), this protein is Catalase-peroxidase 1.